A 179-amino-acid polypeptide reads, in one-letter code: Insulin-like growth factor 2 (179 aa).

The N-terminal stretch at 1–24 (MGITAGKSMLALLAFLAFASCCYA) is a signal peptide. The tract at residues 25–52 (AYRPSETLCGGELVDTLQFVCGDRGFYF) is b. 3 disulfides stabilise this stretch: cysteine 33–cysteine 71, cysteine 45–cysteine 84, and cysteine 70–cysteine 75. Positions 53 to 64 (SRPSSRINRRSR) are c. Residues 65–85 (GIVEECCFRSCDLALLETYCA) form an a region. A d region spans residues 86-91 (APAKSE). Residues 92-179 (RDVSASTTVL…GGASSEASSD (88 aa)) constitute a propeptide, e peptide. The O-linked (GalNAc...) threonine glycan is linked to threonine 106. O-linked (GalNAc...) serine glycosylation occurs at serine 154. A disordered region spans residues 160 to 179 (ALPTQDPATHGGASSEASSD). Threonine 163 is a glycosylation site (O-linked (GalNAc...) threonine).

The protein belongs to the insulin family. As to quaternary structure, interacts with MYORG; this interaction is required for IGF2 secretion. Interacts with integrins ITGAV:ITGB3 and ITGA6:ITGB4; integrin-binding is required for IGF2 signaling. Interacts with IGFBP2. In terms of processing, proteolytically processed by PCSK4, proIGF2 is cleaved at Arg-128 and Arg-92 to generate big-IGF2 and mature IGF2.

The protein resides in the secreted. In terms of biological role, the insulin-like growth factors possess growth-promoting activity. Major fetal growth hormone in mammals. Plays a key role in regulating fetoplacental development. IGF2 is influenced by placental lactogen. Also involved in tissue differentiation. In adults, involved in glucose metabolism in adipose tissue, skeletal muscle and liver. Acts as a ligand for integrin which is required for IGF2 signaling. Positively regulates myogenic transcription factor MYOD1 function by facilitating the recruitment of transcriptional coactivators, thereby controlling muscle terminal differentiation. Inhibits myoblast differentiation and modulates metabolism via increasing the mitochondrial respiration rate. Its function is as follows. Preptin undergoes glucose-mediated co-secretion with insulin, and acts as a physiological amplifier of glucose-mediated insulin secretion. Exhibits osteogenic properties by increasing osteoblast mitogenic activity through phosphoactivation of MAPK1 and MAPK3. The protein is Insulin-like growth factor 2 of Ovis aries (Sheep).